Consider the following 346-residue polypeptide: uncharacterized protein (346 aa).

A disordered region spans residues 10–109 (WDFIMTDPSS…SNSNGNNSPV (100 aa)). Low complexity predominate over residues 26–44 (KGSSKNGSPKTSSPKSGSP). Residues 56 to 67 (NQQLLQNDSINL) are compositionally biased toward polar residues. Positions 94–109 (KSSVVPSNSNGNNSPV) are enriched in low complexity.

This is an uncharacterized protein from Dictyostelium discoideum (Social amoeba).